The chain runs to 510 residues: Maturase K (510 aa).

Belongs to the intron maturase 2 family. MatK subfamily.

It localises to the plastid. Its subcellular location is the chloroplast. Functionally, usually encoded in the trnK tRNA gene intron. Probably assists in splicing its own and other chloroplast group II introns. The polypeptide is Maturase K (Cestrum elegans (Red cestrum)).